The following is a 437-amino-acid chain: Histidine--tRNA ligase (437 aa).

Belongs to the class-II aminoacyl-tRNA synthetase family. In terms of assembly, homodimer.

It is found in the cytoplasm. The enzyme catalyses tRNA(His) + L-histidine + ATP = L-histidyl-tRNA(His) + AMP + diphosphate + H(+). The protein is Histidine--tRNA ligase of Opitutus terrae (strain DSM 11246 / JCM 15787 / PB90-1).